The following is a 116-amino-acid chain: Flagellar hook-basal body complex protein FliE (116 aa).

Belongs to the FliE family.

It localises to the bacterial flagellum basal body. The protein is Flagellar hook-basal body complex protein FliE of Rhizobium rhizogenes (strain K84 / ATCC BAA-868) (Agrobacterium radiobacter).